Reading from the N-terminus, the 231-residue chain is Large ribosomal subunit protein uL1 (231 aa).

The protein belongs to the universal ribosomal protein uL1 family. In terms of assembly, part of the 50S ribosomal subunit.

Functionally, binds directly to 23S rRNA. The L1 stalk is quite mobile in the ribosome, and is involved in E site tRNA release. Protein L1 is also a translational repressor protein, it controls the translation of the L11 operon by binding to its mRNA. This chain is Large ribosomal subunit protein uL1, found in Azoarcus sp. (strain BH72).